Consider the following 94-residue polypeptide: Large ribosomal subunit protein bL27 (94 aa).

A propeptide spanning residues 1–9 (MNLANLQLF) is cleaved from the precursor. The tract at residues 11 to 34 (HKKGGGSTSNGRDSQAKRLGAKAA) is disordered.

It belongs to the bacterial ribosomal protein bL27 family. In terms of processing, the N-terminus is cleaved by ribosomal processing cysteine protease Prp.

The polypeptide is Large ribosomal subunit protein bL27 (Streptococcus pyogenes serotype M3 (strain ATCC BAA-595 / MGAS315)).